Here is a 617-residue protein sequence, read N- to C-terminus: Isopropyl malate synthase gloH (617 aa).

The 279-residue stretch at 47 to 325 folds into the Pyruvate carboxyltransferase domain; it reads PIWLSTDLRD…ETGLDFSDLL (279 aa).

This sequence belongs to the alpha-IPM synthase/homocitrate synthase family. LeuA type 2 subfamily.

It catalyses the reaction 3-methyl-2-oxobutanoate + acetyl-CoA + H2O = (2S)-2-isopropylmalate + CoA + H(+). It participates in mycotoxin biosynthesis. 2-isopropylmalate synthase; part of the gene cluster that mediates the biosynthesis of pneumocandins, lipohexapeptides of the echinocandin family that prevent fungal cell wall formation by non-competitive inhibition of beta-1,3-glucan synthase. The 10,12-dimethylmyristoyl side chain is synthesized by the reducing polyketide synthase gloL/GLPKS4. The thioesterase gloN/GLHYD exclusively interacts with gloL/GLPKS4 to maintain turnover of the polyketide side chain. The 10R,12S-dimethylmyristic acid is then transferred to the first thiolation domain of the nonribosomal peptide synthetase gloA/GLNRPS4 by the acyl-AMP ligase gloD/GLligase, followed by its acylation to L-ornithine to trigger elongation of the cyclic hexapeptide. L-ornithine, 4R-hydroxyl-L-proline (generated from L-proline by the dioxygenase gloF/GLOXY2), 3S-hydroxyl-L-homotyrosine (generated by gloG/GLHtyB, gloH/GLHtyA, gloI/GLHtyC, gloJ/GLHtyD and hydroxylated at C-3 by the dioxygenase gloM/GLOXY1), 3R-hydroxyl-L-glutamine (generated from L-glutamine probably by the dioxygenase gloE/GLOXY3) and 3S-hydroxyl-L-proline (generated from L-proline by the dioxygenase gloF/GLOXY2 to yield pneumocandin B0), or 3S-hydroxyl-4S-methyl-L-proline (generated from L-leucine by the dioxygenase gloC/GLOXY4 to yield pneumocandin A0) are sequentially added to the growing chain. The last C domain of gloA/GLNRPS4 is proposed to be responsible for cyclization by condensation to form the peptide bond between L-ornithine and 3S-hydroxyl-4S-methyl-L-proline (for pneumocandin A0) or 3S-hydroxyl-L-proline (for pneumocandin B0). Finally, the subsequent C-4 hydroxylation of 3S-hydroxyl-L-homotyrosine and L-ornithine dihydroxylation at C-4 and C-5 are performed by the cytochrome P450 monooxygenases gloP/GLP450-1 and gloO/GLP450-2, respectively. In Glarea lozoyensis (strain ATCC 20868 / MF5171), this protein is Isopropyl malate synthase gloH.